A 425-amino-acid polypeptide reads, in one-letter code: D-tagatose 6-phosphate 4-epimerase (425 aa).

Belongs to the GatZ/KbaZ family.

The catalysed reaction is keto-D-tagatose 6-phosphate = keto-D-fructose 6-phosphate. Its pathway is carbohydrate metabolism. In terms of biological role, involved in galactitol and D-altritol catabolism. Catalyzes the epimerization of D-tagatose 6-phosphate to D-fructose 6-phosphate. The sequence is that of D-tagatose 6-phosphate 4-epimerase from Agrobacterium fabrum (strain C58 / ATCC 33970) (Agrobacterium tumefaciens (strain C58)).